The primary structure comprises 607 residues: Autophagy-related protein 22-2 (607 aa).

The segment at phenylalanine 9–threonine 31 is disordered. The chain crosses the membrane as a helical span at residues tyrosine 44–leucine 64. Asparagine 88 and asparagine 91 each carry an N-linked (GlcNAc...) asparagine glycan. 3 consecutive transmembrane segments (helical) span residues serine 111 to phenylalanine 131, threonine 143 to valine 160, and phenylalanine 161 to valine 178. The segment at glutamine 203–serine 263 is disordered. Asparagine 235 carries an N-linked (GlcNAc...) asparagine glycan. 8 helical membrane passes run glycine 277–leucine 297, threonine 310–valine 330, valine 381–threonine 401, proline 415–tryptophan 435, isoleucine 450–proline 470, tryptophan 484–cysteine 504, tyrosine 521–valine 543, and glycine 552–alanine 572. Residues threonine 585–glutamate 607 are disordered.

The protein belongs to the ATG22 family.

The protein resides in the vacuole membrane. Its function is as follows. Vacuolar effluxer which mediate the efflux of amino acids resulting from autophagic degradation. The release of autophagic amino acids allows the maintenance of protein synthesis and viability during nitrogen starvation. This is Autophagy-related protein 22-2 (atg22-2) from Penicillium rubens (strain ATCC 28089 / DSM 1075 / NRRL 1951 / Wisconsin 54-1255) (Penicillium chrysogenum).